The sequence spans 126 residues: Cornifin alpha (126 aa).

Ser2 carries the post-translational modification N-acetylserine. 13 tandem repeats follow at residues 3-14, 18-29, 31-38, 39-46, 47-54, 55-62, 63-70, 71-78, 79-86, 87-94, 95-102, 103-110, and 111-118. Residues 3–29 form a 2 X 12 AA approximate repeats region; it reads SQQQKQPCTLPPQLQQHQVKQPCQPPP. Residues 20–43 are disordered; sequence QVKQPCQPPPQEPCVPKTKEPCQP. The interval 31–122 is 11 X 8 AA approximate tandem repeats; sequence EPCVPKTKEP…CQPKVPEPCQ (92 aa). The tract at residues 104 to 126 is disordered; the sequence is PCQSKVPQPCQPKVPEPCQTKQK.

The protein belongs to the cornifin (SPRR) family. As to expression, suprabasal layers of squamous-differentiated tissues such as epidermis, esophagus, tongue and trachea.

The protein resides in the cytoplasm. Cross-linked envelope protein of keratinocytes. It is a keratinocyte protein that first appears in the cell cytosol, but ultimately becomes cross-linked to membrane proteins by transglutaminase. All that results in the formation of an insoluble envelope beneath the plasma membrane. This is Cornifin alpha from Oryctolagus cuniculus (Rabbit).